Reading from the N-terminus, the 396-residue chain is Aspartate aminotransferase (396 aa).

3 residues coordinate L-aspartate: G34, W130, and N183. Position 246 is an N6-(pyridoxal phosphate)lysine (K246). Position 374 (R374) interacts with L-aspartate.

Belongs to the class-I pyridoxal-phosphate-dependent aminotransferase family. In terms of assembly, homodimer. The cofactor is pyridoxal 5'-phosphate.

Its subcellular location is the cytoplasm. The enzyme catalyses L-aspartate + 2-oxoglutarate = oxaloacetate + L-glutamate. In Haemophilus influenzae (strain ATCC 51907 / DSM 11121 / KW20 / Rd), this protein is Aspartate aminotransferase (aspC).